Consider the following 1427-residue polypeptide: DNA-directed RNA polymerase subunit beta' (1427 aa).

Residues Cys66, Cys68, Cys81, and Cys84 each contribute to the Zn(2+) site. 3 residues coordinate Mg(2+): Asp472, Asp474, and Asp476. Residues Cys815, Cys889, Cys896, and Cys899 each contribute to the Zn(2+) site.

The protein belongs to the RNA polymerase beta' chain family. In terms of assembly, the RNAP catalytic core consists of 2 alpha, 1 beta, 1 beta' and 1 omega subunit. When a sigma factor is associated with the core the holoenzyme is formed, which can initiate transcription. The cofactor is Mg(2+). It depends on Zn(2+) as a cofactor.

It catalyses the reaction RNA(n) + a ribonucleoside 5'-triphosphate = RNA(n+1) + diphosphate. DNA-dependent RNA polymerase catalyzes the transcription of DNA into RNA using the four ribonucleoside triphosphates as substrates. The protein is DNA-directed RNA polymerase subunit beta' of Bacteroides thetaiotaomicron (strain ATCC 29148 / DSM 2079 / JCM 5827 / CCUG 10774 / NCTC 10582 / VPI-5482 / E50).